We begin with the raw amino-acid sequence, 362 residues long: N-acylethanolamine-hydrolyzing acid amidase (362 aa).

An N-terminal signal peptide occupies residues 1–33 (MGTPAIRAACHGAHLALALLLLLSLSDPWLWAT). Residues Asn42 and Asn112 are each glycosylated (N-linked (GlcNAc...) asparagine). Cys131 (nucleophile) is an active-site residue. Asn314 and Asn338 each carry an N-linked (GlcNAc...) asparagine glycan.

It belongs to the acid ceramidase family. In terms of assembly, heterodimer of an alpha and a beta subunit, produced by autocatalytic cleavage. Post-translationally, N-glycosylated. Tunicamycin treatment causes a reduction in specific activity against N-palmitoylethanolamine. In terms of processing, autoproteolytic cleavage at pH 4.5 gives rise to the alpha and beta subunit. Cleavage gives rise to a conformation change that activates the enzyme. The same catalytic Cys residue mediates the autoproteolytic cleavage and subsequent hydrolysis of lipid substrates. As to expression, expressed in brain, cecum, colon, heart, ileum, kidney, liver, lung, spleen, stomach, submaxillary gland, testis and thymus.

It is found in the lysosome. The protein localises to the membrane. The catalysed reaction is N-hexadecanoylethanolamine + H2O = ethanolamine + hexadecanoate. The enzyme catalyses an N-(long-chain fatty acyl)ethanolamine + H2O = a long-chain fatty acid + ethanolamine. It carries out the reaction N-dodecanoylethanolamine + H2O = dodecanoate + ethanolamine. It catalyses the reaction N-tetradecanoylethanolamine + H2O = tetradecanoate + ethanolamine. The catalysed reaction is an N-acylsphing-4-enine + H2O = sphing-4-enine + a fatty acid. The enzyme catalyses N-hexadecanoylsphing-4-enine + H2O = sphing-4-enine + hexadecanoate. It carries out the reaction N-dodecanoylsphing-4-enine + H2O = dodecanoate + sphing-4-enine. The protein operates within lipid metabolism; fatty acid metabolism. With respect to regulation, stimulated by DTT. Stimulated by nonionic detergent of the polyoxyethylenep-t-octylphenylether type (Triton X-100 or Nonidet P-40) whereas 3-[(3-cholamidopropyl)dimethylammonio]propane-1-sulfonate (CHAPS) and octyl alpha-D-glucopyranoside decrease the N-(long-chain-acyl)ethanolamine deacylase activity. Polysorbate 20 (Tween 20) is inhibitory. Stimulated by endogenous phospholipids such as choline- or ethanolamine-containing phospholipids, and dihydrolipoic acid. Degrades bioactive fatty acid amides to their corresponding acids, with the following preference: N-palmitoylethanolamine &gt; N-myristoylethanolamine &gt; N-stearoylethanolamine &gt; N-oleoylethanolamine &gt; N-linoleoylethanolamine &gt; N-arachidonoylethanolamine. This chain is N-acylethanolamine-hydrolyzing acid amidase, found in Rattus norvegicus (Rat).